A 174-amino-acid polypeptide reads, in one-letter code: NADPH-dependent 7-cyano-7-deazaguanine reductase (174 aa).

Residue C72 is the Thioimide intermediate of the active site. The Proton donor role is filled by D79. Residues 94–96 (VES) and 113–114 (HE) contribute to the substrate site.

It belongs to the GTP cyclohydrolase I family. QueF type 1 subfamily.

Its subcellular location is the cytoplasm. It carries out the reaction 7-aminomethyl-7-carbaguanine + 2 NADP(+) = 7-cyano-7-deazaguanine + 2 NADPH + 3 H(+). It participates in tRNA modification; tRNA-queuosine biosynthesis. Functionally, catalyzes the NADPH-dependent reduction of 7-cyano-7-deazaguanine (preQ0) to 7-aminomethyl-7-deazaguanine (preQ1). The chain is NADPH-dependent 7-cyano-7-deazaguanine reductase from Synechococcus elongatus (strain ATCC 33912 / PCC 7942 / FACHB-805) (Anacystis nidulans R2).